The sequence spans 506 residues: Lysine--tRNA ligase (506 aa).

Glutamate 415 and glutamate 422 together coordinate Mg(2+).

This sequence belongs to the class-II aminoacyl-tRNA synthetase family. Homodimer. Mg(2+) is required as a cofactor.

It localises to the cytoplasm. The enzyme catalyses tRNA(Lys) + L-lysine + ATP = L-lysyl-tRNA(Lys) + AMP + diphosphate. The chain is Lysine--tRNA ligase (lysS) from Buchnera aphidicola subsp. Acyrthosiphon pisum (strain APS) (Acyrthosiphon pisum symbiotic bacterium).